The following is a 470-amino-acid chain: Beta-Ala-Xaa dipeptidase (470 aa).

Histidine 87 serves as a coordination point for Zn(2+). Aspartate 89 is an active-site residue. Aspartate 119 is a binding site for Zn(2+). Glutamate 153 serves as the catalytic Proton acceptor. The Zn(2+) site is built by glutamate 154 and aspartate 177. Arginine 350 lines the substrate pocket. Histidine 439 lines the Zn(2+) pocket.

The protein belongs to the peptidase M20A family. Zn(2+) serves as cofactor.

The protein localises to the cytoplasm. Its activity is regulated as follows. Fully inhibited by 1,10-phenanthroline or EDTA. Its function is as follows. Is a relatively unspecific dipeptidase cleaving a variety of dipeptides, notably those with an N-terminal beta-Ala or D-Ala residue, e.g. carnosine (beta-Ala-His). To a lesser extent, also shows aminopeptidase activity, since it is able to catalyze the removal of the N-terminal amino acid from a few distinct tripeptides. This is Beta-Ala-Xaa dipeptidase (pepV) from Lactobacillus delbrueckii subsp. lactis.